A 350-amino-acid polypeptide reads, in one-letter code: Arabinogalactan endo-beta-1,4-galactanase A (350 aa).

A signal peptide spans 1 to 17 (MILSSLLPLSLVTLTSA). An N-linked (GlcNAc...) asparagine glycan is attached at N129. E153 functions as the Proton donor in the catalytic mechanism. Catalysis depends on E263, which acts as the Nucleophile.

This sequence belongs to the glycosyl hydrolase 53 family.

Its subcellular location is the secreted. The enzyme catalyses The enzyme specifically hydrolyzes (1-&gt;4)-beta-D-galactosidic linkages in type I arabinogalactans.. Endogalactanase involved in the degradation of plant cell wall polysaccharides, and more particularly of hairy regions of pectin. The sequence is that of Arabinogalactan endo-beta-1,4-galactanase A (galA) from Emericella nidulans (strain FGSC A4 / ATCC 38163 / CBS 112.46 / NRRL 194 / M139) (Aspergillus nidulans).